The sequence spans 695 residues: Probable glucan endo-1,3-beta-glucosidase btgC (695 aa).

Disordered stretches follow at residues 1–53 (MSGP…THHG), 117–140 (RRGT…GSDN), 175–258 (GPAG…RSQA), and 286–314 (ETSY…STGS). The Cytoplasmic portion of the chain corresponds to 1–317 (MSGPHRTFSF…PKPSTGSRKR (317 aa)). Residues 36–45 (PISNMSSSPG) show a composition bias toward polar residues. Residues 188-198 (HLGTSNSSQRN) are compositionally biased toward polar residues. Over residues 231–241 (NPEEIADDGDD) the composition is skewed to acidic residues. A helical; Signal-anchor for type II membrane protein transmembrane segment spans residues 318-338 (GWIIGAILAVIIIGAIVGGAV). Residues 339-695 (GGTIGHKDSG…IPDCGGKTAA (357 aa)) lie on the Extracellular side of the membrane. The segment at 346–372 (DSGDSASGSSASTQSASGDTDTNGDLD) is disordered. Residues 349–366 (DSASGSSASTQSASGDTD) are compositionally biased toward low complexity. N-linked (GlcNAc...) asparagine glycosylation is found at Asn415, Asn438, and Asn466. Glu498 acts as the Proton donor in catalysis. The Nucleophile role is filled by Glu597. N-linked (GlcNAc...) asparagine glycosylation occurs at Asn642.

The protein belongs to the glycosyl hydrolase 17 family.

The protein resides in the cell membrane. It carries out the reaction Hydrolysis of (1-&gt;3)-beta-D-glucosidic linkages in (1-&gt;3)-beta-D-glucans.. Functionally, glucanases play a role in cell expansion during growth, in cell-cell fusion during mating, and in spore release during sporulation. This enzyme may be involved in beta-glucan degradation. Active on laminarin and lichenan. In Aspergillus clavatus (strain ATCC 1007 / CBS 513.65 / DSM 816 / NCTC 3887 / NRRL 1 / QM 1276 / 107), this protein is Probable glucan endo-1,3-beta-glucosidase btgC (btgC).